Consider the following 85-residue polypeptide: Depressant insect toxin BmK ITa1 (85 aa).

The signal sequence occupies residues 1–21; sequence MKLFLLLLISASMLIDGLVNA. In terms of domain architecture, LCN-type CS-alpha/beta spans 22–82; sequence DGYIRGSNGC…TWKSESNTCG (61 aa). 4 disulfides stabilise this stretch: cysteine 31–cysteine 81, cysteine 35–cysteine 56, cysteine 42–cysteine 63, and cysteine 46–cysteine 65. Glycine 82 carries the glycine amide modification.

The protein belongs to the long (4 C-C) scorpion toxin superfamily. Sodium channel inhibitor family. Beta subfamily. In terms of tissue distribution, expressed by the venom gland.

It is found in the secreted. Its function is as follows. Depressant insect toxins cause a transient contraction paralysis followed by a slow flaccid paralysis. They bind voltage-independently to sodium channels (Nav) and block action potentials, primarily by depolarizing the axonal membrane and suppressing the sodium current. In Olivierus martensii (Manchurian scorpion), this protein is Depressant insect toxin BmK ITa1.